We begin with the raw amino-acid sequence, 185 residues long: Nodulin-20 (185 aa).

Residues 1–17 (MRVVLITLFLFIGAAVA) form the signal peptide.

The protein belongs to the nodulin 20 family.

The protein resides in the symbiosome. Its subcellular location is the peribacteroid membrane. It localises to the peribacteroid space. This is Nodulin-20 from Glycine max (Soybean).